The chain runs to 149 residues: Probable glycine cleavage system H protein 2 (149 aa).

Residues Ile32 to Lys114 form the Lipoyl-binding domain. Lys73 carries the post-translational modification N6-lipoyllysine.

It belongs to the GcvH family. In terms of assembly, the glycine cleavage system is composed of four proteins: P, T, L and H. (R)-lipoate is required as a cofactor.

The glycine cleavage system catalyzes the degradation of glycine. The H protein shuttles the methylamine group of glycine from the P protein to the T protein. The protein is Probable glycine cleavage system H protein 2 of Sulfolobus acidocaldarius (strain ATCC 33909 / DSM 639 / JCM 8929 / NBRC 15157 / NCIMB 11770).